The chain runs to 231 residues: Flagellar L-ring protein (231 aa).

Residues 1-18 (MNRLLSVFALGGAVLLAG) form the signal peptide. Cys19 is lipidated: N-palmitoyl cysteine. A lipid anchor (S-diacylglycerol cysteine) is attached at Cys19.

It belongs to the FlgH family. As to quaternary structure, the basal body constitutes a major portion of the flagellar organelle and consists of four rings (L,P,S, and M) mounted on a central rod.

The protein resides in the cell outer membrane. Its subcellular location is the bacterial flagellum basal body. In terms of biological role, assembles around the rod to form the L-ring and probably protects the motor/basal body from shearing forces during rotation. The sequence is that of Flagellar L-ring protein from Pseudomonas putida (strain ATCC 700007 / DSM 6899 / JCM 31910 / BCRC 17059 / LMG 24140 / F1).